Consider the following 257-residue polypeptide: MLAKRIVPCLDVREGKVVKGVQFRNHEIVGDIVPLAARYAEEGADELVFYDITASAHDRVIDKSWVSRVAERIDIPFCVAGGISSIEQAREKLAFGADKISVNSPALSDPSLIQRLQDEFGRQCIVIGIDSYYDEASDSYRVKQFTGDESATKDTQWFTQNWVEEVQKRGCGEIVLNVMNQDGVRQGYDLKQLSIIREICDVPLIASGGAGTMEHFKDVFEIAKVDAALAASVFHKGIIDINELKTYLAQHKIPTRR.

Active-site residues include aspartate 11 and aspartate 130.

The protein belongs to the HisA/HisF family. Heterodimer of HisH and HisF.

The protein localises to the cytoplasm. It catalyses the reaction 5-[(5-phospho-1-deoxy-D-ribulos-1-ylimino)methylamino]-1-(5-phospho-beta-D-ribosyl)imidazole-4-carboxamide + L-glutamine = D-erythro-1-(imidazol-4-yl)glycerol 3-phosphate + 5-amino-1-(5-phospho-beta-D-ribosyl)imidazole-4-carboxamide + L-glutamate + H(+). It functions in the pathway amino-acid biosynthesis; L-histidine biosynthesis; L-histidine from 5-phospho-alpha-D-ribose 1-diphosphate: step 5/9. Functionally, IGPS catalyzes the conversion of PRFAR and glutamine to IGP, AICAR and glutamate. The HisF subunit catalyzes the cyclization activity that produces IGP and AICAR from PRFAR using the ammonia provided by the HisH subunit. The polypeptide is Imidazole glycerol phosphate synthase subunit HisF (Shewanella woodyi (strain ATCC 51908 / MS32)).